We begin with the raw amino-acid sequence, 250 residues long: UPF0494 membrane protein PB2B2.07c (250 aa).

3 consecutive transmembrane segments (helical) span residues Trp98–Val118, Ile144–Leu164, and Met179–Ile199.

This sequence belongs to the UPF0494 family.

It localises to the cytoplasm. The protein resides in the endoplasmic reticulum. The protein localises to the golgi apparatus. Its subcellular location is the membrane. The protein is UPF0494 membrane protein PB2B2.07c of Schizosaccharomyces pombe (strain 972 / ATCC 24843) (Fission yeast).